The sequence spans 285 residues: Cell division protein DivIB (285 aa).

Basic and acidic residues predominate over residues 1–19; sequence MNEKNKNDESKHQEDKLQD. Residues 1–20 are disordered; the sequence is MNEKNKNDESKHQEDKLQDQ. Over 1–66 the chain is Cytoplasmic; that stretch reads MNEKNKNDES…NRFNAMERNS (66 aa). The helical transmembrane segment at 67–87 threads the bilayer; the sequence is IHMIVILSIISLLLILLLSPL. Residues 88-158 enclose the POTRA domain; the sequence is MRFQKVEITG…QVAQIKIEEN (71 aa). Residues 88–285 lie on the Extracellular side of the membrane; that stretch reads MRFQKVEITG…FQVGTYFQQY (198 aa).

Belongs to the FtsQ/DivIB family. DivIB subfamily.

It is found in the cell membrane. Its function is as follows. Cell division protein that may be involved in stabilizing or promoting the assembly of the division complex. This Weissella koreensis (strain KACC 15510) protein is Cell division protein DivIB.